Reading from the N-terminus, the 636-residue chain is Probable potassium transport system protein Kup (636 aa).

12 consecutive transmembrane segments (helical) span residues 22-42, 64-84, 115-135, 150-170, 182-202, 220-240, 261-281, 293-313, 351-371, 383-403, 408-428, and 433-453; these read VGLLVAAVGVVYGDIGTSPLY, ILSLILWSLLWVVSFKYVMFI, LMVICGLIGASLFYGDSMITP, FDGIDHWVVPISLVVLVALFL, LFGPIMVTWFLALGALGVHGI, FFVVHPGIGVAILGAVVLALT, WFILVLPALVLNYFGQGALLL, LLAPGWALLPLVGLATMATVI, IYIGAVNWTLMVGVVLLVIGF, VAVTGTMLITTVLVSAVMLLL, PLLAVPILVGFLLVDGLFFAA, and IAQGGAFPVLAGGVLYLLMST.

It belongs to the HAK/KUP transporter (TC 2.A.72) family.

It localises to the cell inner membrane. The enzyme catalyses K(+)(in) + H(+)(in) = K(+)(out) + H(+)(out). In terms of biological role, transport of potassium into the cell. Likely operates as a K(+):H(+) symporter. This chain is Probable potassium transport system protein Kup, found in Pseudomonas putida (strain ATCC 47054 / DSM 6125 / CFBP 8728 / NCIMB 11950 / KT2440).